The following is a 618-amino-acid chain: Mitochondrial Rho GTPase 1 (618 aa).

Residues 1-592 are Cytoplasmic-facing; the sequence is MKKDVRILLV…TQADLKSSTF (592 aa). A Miro 1 domain is found at 2-168; it reads KKDVRILLVG…FYYAQKAVLH (167 aa). GTP-binding residues include Arg14, Gly16, Lys17, Thr18, and Ser19. Position 18 (Thr18) interacts with Mg(2+). Residues Pro35 and Asp57 each contribute to the Mg(2+) site. Residue Ser59 participates in GTP binding. Lys92 is subject to N6-acetyllysine. Asn118, Lys119, Asp121, Ala149, and Lys150 together coordinate GTP. Lys153 is covalently cross-linked (Glycyl lysine isopeptide (Lys-Gly) (interchain with G-Cter in ubiquitin)). The 36-residue stretch at 184-219 folds into the EF-hand 1 domain; that stretch reads ACIKALTRIFKISDQDNDGTLNDAELNFFQRICFNT. Ca(2+)-binding residues include Asp197, Asp199, Asp201, Thr203, and Glu208. Lys235 participates in a covalent cross-link: Glycyl lysine isopeptide (Lys-Gly) (interchain with G-Cter in ubiquitin). In terms of domain architecture, EF-hand 2 spans 304 to 339; sequence HAYLFLQSTFDKHDLDRDCALSPDELKDLFKVFPYI. 5 residues coordinate Ca(2+): Asp317, Asp319, Asp321, Ala323, and Glu328. A Miro 2 domain is found at 416–579; that stretch reads RNVFRCNVIG…FVKLTTMAMY (164 aa). Asn428, Cys429, Gly430, Lys431, Ser432, Gly433, and Lys447 together coordinate GTP. Residue Asn428 participates in Mg(2+) binding. Positions 428, 429, 430, 431, 432, 433, 447, 454, 477, 478, 528, 530, 558, 559, and 560 each coordinate GDP. Lys528, Asp530, Thr558, and Cys559 together coordinate GTP. Residue Lys572 forms a Glycyl lysine isopeptide (Lys-Gly) (interchain with G-Cter in ubiquitin) linkage. The chain crosses the membrane as a helical; Anchor for type IV membrane protein span at residues 593–615; that stretch reads WLRASFGATVFAVLGFAMYKALL. The Mitochondrial intermembrane segment spans residues 616 to 618; sequence KQR.

Belongs to the mitochondrial Rho GTPase family. Homodimer. Interacts with the kinesin-binding proteins TRAK1/OIP106 and TRAK2/GRIF1, forming a link between mitochondria and the trafficking apparatus of the microtubules. Interacts with RAP1GDS1. Interacts with ARMCX1. Found in a complex with KIF5B, OGT, RHOT2 and TRAK1. In terms of processing, ubiquitinated by PRKN during mitophagy, leading to its degradation and enhancement of mitophagy. Deubiquitinated by USP30. Acetylation on Lys-92 decreases sensitivity of mitochondrial transport to elevated Ca(2+) levels, increases mitochondrial transport and promotes axon growth. Deacetylated by HDAC6 which blocks mitochondrial transport and mediates axon growth inhibition. Ubiquitously expressed. Expressed at high level in heart and skeletal muscle.

It localises to the mitochondrion outer membrane. It catalyses the reaction GTP + H2O = GDP + phosphate + H(+). The catalysed reaction is ATP + H2O = ADP + phosphate + H(+). The enzyme catalyses UTP + H2O = UDP + phosphate + H(+). Functionally, atypical mitochondrial nucleoside-triphosphatase (NTPase) involved in mitochondrial trafficking. Probably involved in control of anterograde transport of mitochondria and their subcellular distribution. Promotes mitochondrial fission during high calcium conditions. Can hydrolyze GTP, ATP and UTP. This is Mitochondrial Rho GTPase 1 (RHOT1) from Homo sapiens (Human).